A 195-amino-acid chain; its full sequence is Peptide methionine sulfoxide reductase MsrA 2 (195 aa).

Residue C18 is part of the active site.

This sequence belongs to the MsrA Met sulfoxide reductase family.

It catalyses the reaction L-methionyl-[protein] + [thioredoxin]-disulfide + H2O = L-methionyl-(S)-S-oxide-[protein] + [thioredoxin]-dithiol. The enzyme catalyses [thioredoxin]-disulfide + L-methionine + H2O = L-methionine (S)-S-oxide + [thioredoxin]-dithiol. Its function is as follows. Has an important function as a repair enzyme for proteins that have been inactivated by oxidation. Catalyzes the reversible oxidation-reduction of methionine sulfoxide in proteins to methionine. The chain is Peptide methionine sulfoxide reductase MsrA 2 (msrA2) from Mesorhizobium japonicum (strain LMG 29417 / CECT 9101 / MAFF 303099) (Mesorhizobium loti (strain MAFF 303099)).